A 372-amino-acid polypeptide reads, in one-letter code: MNDKKELKLILVAARNQLSSNDIKSLIAYLESDDCEFEISLQISEPTEQPELLELHRLVAIPALIKVSPAPKQIFAGSNIFSQLQKWLPRWTQEGLTKNLGINLQPSKIDSIRTQKEFLLEDELLVLRQENETLTKRIESQERLLRMVAHELRTPLTAATLAVQSQKLGQIDISKLQEVIKRRLEEIELLSQDLLEVGTTKWEALFNPQKIDLGNISAEVILELEKFWRLRNIEIDTDIPSDLPSVFADQRRMRQVFLNLIENAIKFSRDSGSIKITMIHKTNQWVEITICDKGAGIPLSEQKRIFLDRVRLPQTSEGTSGFGIGLSVCRRIVQVHGGRIWVVSEVGVGSCFHFTVPVWQGQNKEQQYLTKG.

Residues 147-360 enclose the Histidine kinase domain; the sequence is MVAHELRTPL…CFHFTVPVWQ (214 aa). His-150 carries the post-translational modification Phosphohistidine; by autocatalysis.

As to quaternary structure, homooligomerizes. Interacts with KaiC. Participates in the KaiBC complex, whose core is composed of a KaiC homohexamer and 6 KaiB.

It carries out the reaction ATP + protein L-histidine = ADP + protein N-phospho-L-histidine.. In terms of biological role, member of the two-component regulatory system SasA/RpaA involved in genome-wide circadian gene expression. One of several clock output pathways. Participates in the Kai clock protein complex, the main circadian regulator in cyanobacteria, via its interaction with KaiC. KaiC enhances the autophosphorylation activity of SasA, which then transfers its phosphate group to RpaA to activate it. In addition to its output function, recruits fold-shifted KaiB (KaiB(fs)) to KaiC to cooperatively form the KaiB(6):KaiC(6) complex (independent of SasA kinase activity). Required for robustness of the circadian rhythm of gene expression and is involved in clock output, also required for adaptation to light/dark cycles. The protein is Adaptive-response sensory kinase SasA of Prochlorococcus marinus (strain MIT 9301).